The primary structure comprises 345 residues: Succinylglutamate desuccinylase (345 aa).

The Zn(2+) site is built by His-63, Glu-66, and His-160. The active site involves Glu-224.

It belongs to the AspA/AstE family. Succinylglutamate desuccinylase subfamily. The cofactor is Zn(2+).

It catalyses the reaction N-succinyl-L-glutamate + H2O = L-glutamate + succinate. Its pathway is amino-acid degradation; L-arginine degradation via AST pathway; L-glutamate and succinate from L-arginine: step 5/5. In terms of biological role, transforms N(2)-succinylglutamate into succinate and glutamate. The chain is Succinylglutamate desuccinylase from Shewanella woodyi (strain ATCC 51908 / MS32).